The chain runs to 243 residues: Probable 2-phosphosulfolactate phosphatase (243 aa).

Belongs to the ComB family. Mg(2+) serves as cofactor.

It carries out the reaction (2R)-O-phospho-3-sulfolactate + H2O = (2R)-3-sulfolactate + phosphate. This Prochlorococcus marinus (strain MIT 9303) protein is Probable 2-phosphosulfolactate phosphatase.